The following is a 423-amino-acid chain: Aspartate--tRNA(Asp) ligase (423 aa).

Residue Glu-163 participates in L-aspartate binding. Residues Gln-185 to Lys-188 form an aspartate region. Arg-207 contacts L-aspartate. ATP-binding positions include Arg-207–Glu-209, Arg-215–Leu-217, and Glu-346. Positions 346 and 349 each coordinate Mg(2+). Residues Ser-349 and Arg-353 each coordinate L-aspartate. ATP is bound at residue Gly-394–Arg-397.

The protein belongs to the class-II aminoacyl-tRNA synthetase family. Type 2 subfamily. Homodimer. The cofactor is Mg(2+).

It is found in the cytoplasm. The enzyme catalyses tRNA(Asp) + L-aspartate + ATP = L-aspartyl-tRNA(Asp) + AMP + diphosphate. Catalyzes the attachment of L-aspartate to tRNA(Asp) in a two-step reaction: L-aspartate is first activated by ATP to form Asp-AMP and then transferred to the acceptor end of tRNA(Asp). The protein is Aspartate--tRNA(Asp) ligase of Picrophilus torridus (strain ATCC 700027 / DSM 9790 / JCM 10055 / NBRC 100828 / KAW 2/3).